Here is a 265-residue protein sequence, read N- to C-terminus: Novel plant SNARE 11 (265 aa).

Residues 1–215 (MDPISAVSEE…IGRQVATDKC (215 aa)) are Cytoplasmic-facing. The stretch at 30-75 (QKLEKIKDANRQSRQLEELTDKMRDCKSLIKDFDREIKSLESGNDA) forms a coiled coil. In terms of domain architecture, t-SNARE coiled-coil homology spans 144–206 (NSMMDDTDQA…KKASKLVKEI (63 aa)). The chain crosses the membrane as a helical; Anchor for type IV membrane protein span at residues 216–236 (IMAFLFLIVIGVIAIIIVKIV). Topologically, residues 237–265 (NPNNKDIRDIPGVGLAPPAMNRRLLWNHY) are vesicular.

This sequence belongs to the novel plant SNARE family. Interacts with KNOLLE to form a t-SNARE complex. Does not interact with SYP21, VTI12 or VPS45. Expressed in roots, stems, flower, siliques, expanding leaves, but not in mature leaves. Not limited to dividing cells.

It is found in the membrane. Its function is as follows. t-SNARE involved in diverse vesicle trafficking and membrane fusion processes, including cell plate formation. The sequence is that of Novel plant SNARE 11 (NPSN11) from Arabidopsis thaliana (Mouse-ear cress).